We begin with the raw amino-acid sequence, 521 residues long: Protein nucleotidyltransferase YdiU (521 aa).

ATP is bound by residues Gly109, Gly111, Arg112, Lys131, Asp143, Gly144, Arg194, and Arg201. The active-site Proton acceptor is Asp270. Asn271 and Asp280 together coordinate Mg(2+). Asp280 contributes to the ATP binding site.

It belongs to the SELO family. Mg(2+) serves as cofactor. Mn(2+) is required as a cofactor.

The enzyme catalyses L-seryl-[protein] + ATP = 3-O-(5'-adenylyl)-L-seryl-[protein] + diphosphate. It catalyses the reaction L-threonyl-[protein] + ATP = 3-O-(5'-adenylyl)-L-threonyl-[protein] + diphosphate. It carries out the reaction L-tyrosyl-[protein] + ATP = O-(5'-adenylyl)-L-tyrosyl-[protein] + diphosphate. The catalysed reaction is L-histidyl-[protein] + UTP = N(tele)-(5'-uridylyl)-L-histidyl-[protein] + diphosphate. The enzyme catalyses L-seryl-[protein] + UTP = O-(5'-uridylyl)-L-seryl-[protein] + diphosphate. It catalyses the reaction L-tyrosyl-[protein] + UTP = O-(5'-uridylyl)-L-tyrosyl-[protein] + diphosphate. In terms of biological role, nucleotidyltransferase involved in the post-translational modification of proteins. It can catalyze the addition of adenosine monophosphate (AMP) or uridine monophosphate (UMP) to a protein, resulting in modifications known as AMPylation and UMPylation. The sequence is that of Protein nucleotidyltransferase YdiU from Burkholderia pseudomallei (strain K96243).